Reading from the N-terminus, the 138-residue chain is Large ribosomal subunit protein uL16 (138 aa).

Basic residues predominate over residues 1–16; it reads MLIPKRVKFRRQHRPN. The disordered stretch occupies residues 1-25; the sequence is MLIPKRVKFRRQHRPNRSGMSKGGN.

The protein belongs to the universal ribosomal protein uL16 family. As to quaternary structure, part of the 50S ribosomal subunit.

Functionally, binds 23S rRNA and is also seen to make contacts with the A and possibly P site tRNAs. The polypeptide is Large ribosomal subunit protein uL16 (Corynebacterium urealyticum (strain ATCC 43042 / DSM 7109)).